A 113-amino-acid polypeptide reads, in one-letter code: T cell receptor alpha variable 36/delta variable 7 (113 aa).

An N-terminal signal peptide occupies residues 1–21 (MMKCPQALLAIFWLLLSWVSS). An Ig-like domain is found at 23-113 (DKVVQSPLSL…DSAIYLCAVE (91 aa)). N-linked (GlcNAc...) asparagine glycosylation is found at N43 and N96. A disulfide bond links C44 and C110.

In terms of assembly, alpha-beta TR is a heterodimer composed of an alpha and beta chain; disulfide-linked. The alpha-beta TR is associated with the transmembrane signaling CD3 coreceptor proteins to form the TR-CD3 (TcR or TCR). The assembly of alpha-beta TR heterodimers with CD3 occurs in the endoplasmic reticulum where a single alpha-beta TR heterodimer associates with one CD3D-CD3E heterodimer, one CD3G-CD3E heterodimer and one CD247 homodimer forming a stable octameric structure. CD3D-CD3E and CD3G-CD3E heterodimers preferentially associate with TR alpha and TR beta chains, respectively. The association of the CD247 homodimer is the last step of TcR assembly in the endoplasmic reticulum and is required for transport to the cell surface.

Its subcellular location is the cell membrane. Its function is as follows. V region of the variable domain of T cell receptor (TR) alpha chain that participates in the antigen recognition. Alpha-beta T cell receptors are antigen specific receptors which are essential to the immune response and are present on the cell surface of T lymphocytes. Recognize peptide-major histocompatibility (MH) (pMH) complexes that are displayed by antigen presenting cells (APC), a prerequisite for efficient T cell adaptive immunity against pathogens. Binding of alpha-beta TR to pMH complex initiates TR-CD3 clustering on the cell surface and intracellular activation of LCK that phosphorylates the ITAM motifs of CD3G, CD3D, CD3E and CD247 enabling the recruitment of ZAP70. In turn ZAP70 phosphorylates LAT, which recruits numerous signaling molecules to form the LAT signalosome. The LAT signalosome propagates signal branching to three major signaling pathways, the calcium, the mitogen-activated protein kinase (MAPK) kinase and the nuclear factor NF-kappa-B (NF-kB) pathways, leading to the mobilization of transcription factors that are critical for gene expression and essential for T cell growth and differentiation. The T cell repertoire is generated in the thymus, by V-(D)-J rearrangement. This repertoire is then shaped by intrathymic selection events to generate a peripheral T cell pool of self-MH restricted, non-autoaggressive T cells. Post-thymic interaction of alpha-beta TR with the pMH complexes shapes TR structural and functional avidity. The sequence is that of T cell receptor alpha variable 36/delta variable 7 from Homo sapiens (Human).